The sequence spans 294 residues: Homoserine kinase (294 aa).

83–93 (PLARGLGSSAS) serves as a coordination point for ATP.

This sequence belongs to the GHMP kinase family. Homoserine kinase subfamily.

It localises to the cytoplasm. It carries out the reaction L-homoserine + ATP = O-phospho-L-homoserine + ADP + H(+). The protein operates within amino-acid biosynthesis; L-threonine biosynthesis; L-threonine from L-aspartate: step 4/5. Catalyzes the ATP-dependent phosphorylation of L-homoserine to L-homoserine phosphate. The sequence is that of Homoserine kinase from Oceanobacillus iheyensis (strain DSM 14371 / CIP 107618 / JCM 11309 / KCTC 3954 / HTE831).